We begin with the raw amino-acid sequence, 227 residues long: Uridylate kinase (227 aa).

7–11 (KISGK) lines the ATP pocket. G44 contacts UMP. ATP is bound by residues G45 and R49. Residues D66 and 114–120 (FQPGQST) contribute to the UMP site. Residues T140, N141, Y146, and D149 each contribute to the ATP site.

Belongs to the UMP kinase family. As to quaternary structure, homohexamer.

It is found in the cytoplasm. The catalysed reaction is UMP + ATP = UDP + ADP. Its pathway is pyrimidine metabolism; CTP biosynthesis via de novo pathway; UDP from UMP (UMPK route): step 1/1. With respect to regulation, unlike most bacteria, is not activated by GTP. UTP acts as a competitive inhibitor against both substrates. High concentration of UMP abolishes the inhibition of UTP at low ATP concentrations, indicating that UTP binds to the acceptor site (UMP site). Its function is as follows. Catalyzes the reversible phosphorylation of UMP to UDP, with ATP as the most efficient phosphate donor. Is also able to phosphorylate dUMP, although much less efficiently. In Saccharolobus solfataricus (strain ATCC 35092 / DSM 1617 / JCM 11322 / P2) (Sulfolobus solfataricus), this protein is Uridylate kinase (pyrH).